Reading from the N-terminus, the 161-residue chain is MSVTLHTSLGDIKVEIFCDSVPLASENFLALCASNYYNNTIFHRNIKGFMIQGGDPTNTGRGGESIWKKQFKDEFPSHLKHNTRGILSMANSGPDTNGSQFFITYGKHRSLNKVYTVFGKIIAGIEVLDLMEKVPVDDKDLPLNEIILKSVTIHANPIANQ.

Residues 1–153 form the PPIase cyclophilin-type domain; the sequence is MSVTLHTSLG…NEIILKSVTI (153 aa).

This sequence belongs to the cyclophilin-type PPIase family. PPIL3 subfamily.

The enzyme catalyses [protein]-peptidylproline (omega=180) = [protein]-peptidylproline (omega=0). PPIases accelerate the folding of proteins. It catalyzes the cis-trans isomerization of proline imidic peptide bonds in oligopeptides. The sequence is that of Peptidyl-prolyl cis-trans isomerase-like 3 (ppil3) from Dictyostelium discoideum (Social amoeba).